The sequence spans 74 residues: Acyl carrier protein (74 aa).

Positions 1–73 (MAVFEKVQEI…DLVAYVEEQA (73 aa)) constitute a Carrier domain. Ser-35 bears the O-(pantetheine 4'-phosphoryl)serine mark.

This sequence belongs to the acyl carrier protein (ACP) family. In terms of processing, 4'-phosphopantetheine is transferred from CoA to a specific serine of apo-ACP by AcpS. This modification is essential for activity because fatty acids are bound in thioester linkage to the sulfhydryl of the prosthetic group.

The protein resides in the cytoplasm. It participates in lipid metabolism; fatty acid biosynthesis. Carrier of the growing fatty acid chain in fatty acid biosynthesis. This Streptococcus pneumoniae serotype 4 (strain ATCC BAA-334 / TIGR4) protein is Acyl carrier protein.